The primary structure comprises 462 residues: 23S rRNA (uracil(1939)-C(5))-methyltransferase RlmD (462 aa).

Residues 6–76 (KSRKPQQPEY…KRLEEAEMVE (71 aa)) enclose the TRAM domain. 4 residues coordinate [4Fe-4S] cluster: Cys-90, Cys-96, Cys-99, and Cys-178. 6 residues coordinate S-adenosyl-L-methionine: Gln-287, Phe-316, Asn-321, Glu-340, Asp-367, and Asp-388. The active-site Nucleophile is Cys-414.

The protein belongs to the class I-like SAM-binding methyltransferase superfamily. RNA M5U methyltransferase family. RlmD subfamily.

It carries out the reaction uridine(1939) in 23S rRNA + S-adenosyl-L-methionine = 5-methyluridine(1939) in 23S rRNA + S-adenosyl-L-homocysteine + H(+). In terms of biological role, catalyzes the formation of 5-methyl-uridine at position 1939 (m5U1939) in 23S rRNA. This is 23S rRNA (uracil(1939)-C(5))-methyltransferase RlmD from Acinetobacter baumannii (strain AB0057).